A 707-amino-acid chain; its full sequence is Elongation factor G 2 (707 aa).

A tr-type G domain is found at 8-290; the sequence is ERYRNIGISA…AVIDYLPSPA (283 aa). GTP-binding positions include 17–24, 88–92, and 142–145; these read AHIDAGKT, DTPGH, and NKMD.

This sequence belongs to the TRAFAC class translation factor GTPase superfamily. Classic translation factor GTPase family. EF-G/EF-2 subfamily.

Its subcellular location is the cytoplasm. Its function is as follows. Catalyzes the GTP-dependent ribosomal translocation step during translation elongation. During this step, the ribosome changes from the pre-translocational (PRE) to the post-translocational (POST) state as the newly formed A-site-bound peptidyl-tRNA and P-site-bound deacylated tRNA move to the P and E sites, respectively. Catalyzes the coordinated movement of the two tRNA molecules, the mRNA and conformational changes in the ribosome. This Bordetella bronchiseptica (strain ATCC BAA-588 / NCTC 13252 / RB50) (Alcaligenes bronchisepticus) protein is Elongation factor G 2.